Consider the following 697-residue polypeptide: Sialidase B (697 aa).

An N-terminal signal peptide occupies residues 1 to 29; sequence MNKRGLYSKLGISVVGISLLMGVPTLIHA. A substrate-binding site is contributed by Arg-245. Asp-270 serves as the catalytic Proton acceptor. 3 BNR repeats span residues 280 to 291, 462 to 473, and 517 to 528; these read SYSDDNGKTWSE, TTSQNRGESWEQ, and LISDDSGQTWKK. Glu-541 is an active-site residue. A substrate-binding site is contributed by Arg-557. A BNR 4 repeat occupies 566–577; it reads MTSRDSGETWSK. Residue Arg-619 participates in substrate binding. The Nucleophile role is filled by Tyr-653.

Belongs to the glycosyl hydrolase 33 family.

The catalysed reaction is Hydrolysis of alpha-(2-&gt;3)-, alpha-(2-&gt;6)-, alpha-(2-&gt;8)- glycosidic linkages of terminal sialic acid residues in oligosaccharides, glycoproteins, glycolipids, colominic acid and synthetic substrates.. The protein is Sialidase B (nanB) of Streptococcus pneumoniae serotype 4 (strain ATCC BAA-334 / TIGR4).